Consider the following 354-residue polypeptide: uncharacterized protein (354 aa).

A helical membrane pass occupies residues 43 to 63 (LIAVTLWSCVGSLLFICLLAV).

It is found in the cell membrane. This is an uncharacterized protein from Bacillus subtilis (strain 168).